The following is a 654-amino-acid chain: Pentatricopeptide repeat-containing protein At3g16610 (654 aa).

PPR repeat units lie at residues 1-32 (MFLSLLETCIRSRNLVLGQVIHQHLLKRSLTL), 34-64 (SSTVLVNLTRLYASCNEVELARHVFDEIPHP), 67-101 (NPIAWDLMIRAYASNDFAEKALDLYYKMLNSGVRP), 102-136 (TKYTYPFVLKACAGLRAIDDGKLIHSHVNCSDFAT), 137-171 (DMYVCTALVDFYAKCGELEMAIKVFDEMPKRDMVA), 172-203 (WNAMISGFSLHCCLTDVIGLFLDMRRIDGLSP), 204-238 (NLSTIVGMFPALGRAGALREGKAVHGYCTRMGFSN), 239-269 (DLVVKTGILDVYAKSKCIIYARRVFDLDFKK), 270-304 (NEVTWSAMIGGYVENEMIKEAGEVFFQMLVNDNVA), 307-341 (TPVAIGLILMGCARFGDLSGGRCVHCYAVKAGFIL), 342-372 (DLTVQNTIISFYAKYGSLCDAFRQFSEIGLK), 373-407 (DVISYNSLITGCVVNCRPEESFRLFHEMRTSGIRP), 408-442 (DITTLLGVLTACSHLAALGHGSSCHGYCVVHGYAV), 443-473 (NTSICNALMDMYTKCGKLDVAKRVFDTMHKR), 474-508 (DIVSWNTMLFGFGIHGLGKEALSLFNSMQETGVNP), 509-543 (DEVTLLAILSACSHSGLVDEGKQLFNSMSRGDFNV), and 546-576 (RIDHYNCMTDLLARAGYLDEAYDFVNKMPFE). The interval 581–654 (VLGTLLSACW…KTPGYSWVDV (74 aa)) is type E motif; degenerate.

The protein belongs to the PPR family. PCMP-E subfamily.

This Arabidopsis thaliana (Mouse-ear cress) protein is Pentatricopeptide repeat-containing protein At3g16610 (PCMP-E91).